We begin with the raw amino-acid sequence, 1027 residues long: C2 and GRAM domain-containing protein At5g50170 (1027 aa).

The C2 1 domain maps to 1 to 103 (MRLYVYILQA…ENQTLLPTWF (103 aa)). Residues 158–167 (SPKDLISSRD) show a composition bias toward basic and acidic residues. Disordered stretches follow at residues 158–177 (SPKDLISSRDGKRRKHHDGK) and 201–223 (LHDESSVGQSVNSNYEDATDQCS). Basic residues predominate over residues 168 to 177 (GKRRKHHDGK). Over residues 206–223 (SVGQSVNSNYEDATDQCS) the composition is skewed to polar residues. One can recognise a VASt 1 domain in the interval 253–426 (TGGVLVDQKY…LLAKTYKTLD (174 aa)). The chain crosses the membrane as a helical span at residues 452 to 472 (FLYFWSSSVICAVLLSVYVVV). The C2 2 domain maps to 516–639 (TVHFVQARLH…TADELADLSV (124 aa)). The 64-residue stretch at 693 to 756 (AFQKLFGLPH…LWEDIDDIQV (64 aa)) folds into the GRAM domain. Residues 855–1018 (MMSKVYTCDL…VIFDLFQKES (164 aa)) form the VASt 2 domain.

Its subcellular location is the membrane. This chain is C2 and GRAM domain-containing protein At5g50170, found in Arabidopsis thaliana (Mouse-ear cress).